The following is a 451-amino-acid chain: Trigger factor (451 aa).

One can recognise a PPIase FKBP-type domain in the interval 173 to 258 (GDRVTLDFVG…LKKIEWAHLP (86 aa)).

The protein belongs to the FKBP-type PPIase family. Tig subfamily.

The protein resides in the cytoplasm. The catalysed reaction is [protein]-peptidylproline (omega=180) = [protein]-peptidylproline (omega=0). In terms of biological role, involved in protein export. Acts as a chaperone by maintaining the newly synthesized protein in an open conformation. Functions as a peptidyl-prolyl cis-trans isomerase. The protein is Trigger factor of Cupriavidus pinatubonensis (strain JMP 134 / LMG 1197) (Cupriavidus necator (strain JMP 134)).